We begin with the raw amino-acid sequence, 81 residues long: U10-myrmicitoxin-Mri1b (81 aa).

The N-terminal stretch at 1–26 (MRLSYISLTLAIIFVMAIVHAPETEA) is a signal peptide. Positions 27–52 (KAYPEADAVAEAIAVGEADAVGVADP) are excised as a propeptide. The residue at position 80 (valine 80) is a Valine amide.

The protein belongs to the formicidae venom precursor-01 superfamily. In terms of tissue distribution, expressed by the venom gland.

Its subcellular location is the secreted. Induces paralysis after injection into blowflies (L.caesar), and then death within 24 hours. May have antimicrobial properties, like most ant linear peptides. This Manica rubida (European giant red ant) protein is U10-myrmicitoxin-Mri1b.